The following is a 152-amino-acid chain: Catabolic 3-dehydroquinase (152 aa).

The active-site Proton acceptor is Y24. 3 residues coordinate substrate: N75, H81, and D88. H101 (proton donor) is an active-site residue. Substrate contacts are provided by residues 102-103 and R112; that span reads IS.

Belongs to the type-II 3-dehydroquinase family. As to quaternary structure, homododecamer. Adopts a ring-like structure, composed of an arrangement of two hexameric rings stacked on top of one another.

It carries out the reaction 3-dehydroquinate = 3-dehydroshikimate + H2O. The protein operates within aromatic compound metabolism; 3,4-dihydroxybenzoate biosynthesis; 3,4-dihydroxybenzoate from 3-dehydroquinate: step 1/2. Functionally, is involved in the catabolism of quinate. Allows the utilization of quinate as carbon source via the beta-ketoadipate pathway. The chain is Catabolic 3-dehydroquinase from Phaeosphaeria nodorum (strain SN15 / ATCC MYA-4574 / FGSC 10173) (Glume blotch fungus).